A 104-amino-acid chain; its full sequence is Large ribosomal subunit protein bL21 (104 aa).

This sequence belongs to the bacterial ribosomal protein bL21 family. As to quaternary structure, part of the 50S ribosomal subunit. Contacts protein L20.

Its function is as follows. This protein binds to 23S rRNA in the presence of protein L20. This chain is Large ribosomal subunit protein bL21, found in Gluconacetobacter diazotrophicus (strain ATCC 49037 / DSM 5601 / CCUG 37298 / CIP 103539 / LMG 7603 / PAl5).